A 644-amino-acid chain; its full sequence is MVAAIPQGAAISNTDSKNPPPRDRQDKPQLTANNGGLQRRPRAAKNVPSRYLSPSPSHSTTTTTTTATSTSTSSSSSVILRSSKRYPSPLLSRTTNSASNLVYTPSSLPKRSQSVDRRRPSAVSDTRTEMSAATKMLITSTRSLSVSFQGEAFSFPISKKKETATPVSHRKCTPERRRATPVRDQRENSKPVDQQLWPGASRRGSSESVVPNSLSRSVDSDSDDGRKLGSGFVGRSMLQHSQSSRVSGDGRLNLGFVGGDGMLEMRDENKARQSTHPRLASSVSCDFTASDTDSVSSGSTNGAHECGSGEVSKTRSLPRNGMASTKFWQETNSRLRRMQDPGSPQCSSPSSRISSISSKFSQSKRFSSDSPLTSSPRGMTSPIRGATRPASPSKLWATATSAPARTSSSPSRVRNGVSEQMNAYNRTLPSILCFSADIRRGKIGEDRVMDAHLLRLLYNRDLQWRFANARADSTLMVQRLSAEKILWNAWVSISELRHSVTLKRIKLLLMRQKLKLASILKEQMCYLEEWSLLDRNHSNSLSGATEALKASTLRLPVSGKAVVDIQDLKHAVSSAVDVMHAMVSSIFSLTSKVEEMNSVMAEMVNITGKEEVLLEQCQGFLTRVAAMQVTDCSMKTHIIQLSRL.

Disordered stretches follow at residues M1–E129, E162–L252, and S290–R414. A compositionally biased stretch (low complexity) spans S53–S77. Positions L91–S112 are enriched in polar residues. Over residues C172–K190 the composition is skewed to basic and acidic residues. 2 stretches are compositionally biased toward polar residues: residues S290–G302 and T314–N332. 2 stretches are compositionally biased toward low complexity: residues S343–S370 and A397–R412. The short motif at Q463–F466 is the QWRF motif element.

This sequence belongs to the QWRF family. In terms of tissue distribution, expressed in young developing tissues, such as seedlings, roots, flowers, buds and young siliques, and to a lesser extent in mature green tissues.

It localises to the peroxisome. In terms of biological role, probable microtubule-associated peroxisomal protein required for chloroplast biogenesis and for the formation of the prolamellar body and prothylakoids in etioplasts. Not involved in peroxisomal metabolism, including mobilization of storage compounds during germination, fatty acid beta-oxydation or photorespiration. In Arabidopsis thaliana (Mouse-ear cress), this protein is Protein SNOWY COTYLEDON 3 (SCO3).